The sequence spans 839 residues: AMP deaminase (839 aa).

Residues Leu-8–Phe-28 traverse the membrane as a helical segment. The segment at Glu-40–Glu-167 is disordered. The segment covering Asp-85–Thr-94 has biased composition (gly residues). Ser-134 and Ser-140 each carry phosphoserine. Positions Ser-153 to Asn-162 are enriched in acidic residues. A Phosphoserine modification is found at Ser-203. Ala-289 to Ser-296 is a binding site for ATP. Residues His-391 and His-393 each coordinate Zn(2+). Substrate contacts are provided by residues His-393 and Lys-462 to Tyr-467. His-659 contributes to the Zn(2+) binding site. Glu-662 lines the substrate pocket. The active-site Proton acceptor is the His-681. Position 736 (Asp-736) interacts with Zn(2+). Residue Asp-737–Gln-740 participates in substrate binding.

Belongs to the metallo-dependent hydrolases superfamily. Adenosine and AMP deaminases family. Homodimer. Interacts with AHK4. Interacts with EER5. Zn(2+) is required as a cofactor. In terms of tissue distribution, expressed in seedlings, roots, leaves, flowers, pollen grains, pollen tubes and siliques, and at a lower level in stems.

The protein localises to the membrane. It is found in the microsome membrane. It catalyses the reaction AMP + H2O + H(+) = IMP + NH4(+). Its pathway is purine metabolism; IMP biosynthesis via salvage pathway; IMP from AMP: step 1/1. Activated by ATP. Activated by sulfate ions (in vitro). Inhibited by phosphate ions. In terms of biological role, AMP deaminase plays a critical role in energy metabolism. Essential for the transition from zygote to embryo. This is AMP deaminase from Arabidopsis thaliana (Mouse-ear cress).